The primary structure comprises 554 residues: DNA mismatch repair protein MutL (554 aa).

The protein belongs to the DNA mismatch repair MutL/HexB family.

Its function is as follows. This protein is involved in the repair of mismatches in DNA. It is required for dam-dependent methyl-directed DNA mismatch repair. May act as a 'molecular matchmaker', a protein that promotes the formation of a stable complex between two or more DNA-binding proteins in an ATP-dependent manner without itself being part of a final effector complex. This chain is DNA mismatch repair protein MutL, found in Crocosphaera subtropica (strain ATCC 51142 / BH68) (Cyanothece sp. (strain ATCC 51142)).